Here is a 314-residue protein sequence, read N- to C-terminus: DNA-directed RNA polymerase subunit alpha (314 aa).

Residues 1 to 229 (MLESKLKAPV…EHLNYFANPE (229 aa)) form an alpha N-terminal domain (alpha-NTD) region. The interval 246–314 (SAEEDLDLPL…LAKKGFTLKE (69 aa)) is alpha C-terminal domain (alpha-CTD).

It belongs to the RNA polymerase alpha chain family. As to quaternary structure, homodimer. The RNAP catalytic core consists of 2 alpha, 1 beta, 1 beta' and 1 omega subunit. When a sigma factor is associated with the core the holoenzyme is formed, which can initiate transcription.

It catalyses the reaction RNA(n) + a ribonucleoside 5'-triphosphate = RNA(n+1) + diphosphate. Its function is as follows. DNA-dependent RNA polymerase catalyzes the transcription of DNA into RNA using the four ribonucleoside triphosphates as substrates. The chain is DNA-directed RNA polymerase subunit alpha (rpoA) from Thermus aquaticus.